The chain runs to 664 residues: MFKLVSEFEPTGDQPQAIEKLVEGLNRGMRFQTLLGVTGSGKTFTMANVIARVNRPALVISPNKTLAAQLYQEFKTFFPENRVEFFISYYDYYQPEAYIPTKDLYIEKNADINDVIVRMRMSTLKSVRTRRDVVVVASVSCIYATGDPNDFDRMNINLAVGDRIDVLELAERLARIGYQRTEDVSLSGCFRLKGDTVEIYPTYQDEGIRIEFFGDEVDSITLIDRFNRTTLEHLDKIIIYPAVEFITTEEKLKRAVESIREELNERLSELKKQGKILEYERLKQRTLNDIELLETMGYCPGIENYSRHFDGRKPGEPPYTLLDYFDKDFIVFIDESHITVPQLRAMYNGDRSRKKNLVEYGFRLPSAYDNRPLTFEEFLKKTGQIIFVSATPGDFELSISEQVVEQIIRPTGLVDPEVEVRPTAGQVDDLVNEIVKVKERGERALVTVLTKKTAELLSEHLTELGIRSLYLHSELDAIERVEVLKKLRRGDVDVVVGVNLLREGLDLPEVSLVAIMDADVEGFLRSETTLIQIIGRTARNVNGKVIMYADRITNAMKRAIEETNRRRRIQLEYNRKHGITPRSVIKPLEIEVFEQFMVKEEPERYGDTVKNIFEMKKTLSPEEYMAVLEEEMYRAASELRYEDAAALRDELFRIREEIKKKKGL.

The region spanning 23–412 is the Helicase ATP-binding domain; that stretch reads EGLNRGMRFQ…VVEQIIRPTG (390 aa). An ATP-binding site is contributed by 36-43; it reads GVTGSGKT. The Beta-hairpin motif lies at 89 to 112; that stretch reads YYDYYQPEAYIPTKDLYIEKNADI. The Helicase C-terminal domain maps to 429-588; that stretch reads DLVNEIVKVK…ITPRSVIKPL (160 aa). The 36-residue stretch at 622-657 folds into the UVR domain; the sequence is EEYMAVLEEEMYRAASELRYEDAAALRDELFRIREE.

The protein belongs to the UvrB family. Forms a heterotetramer with UvrA during the search for lesions. Interacts with UvrC in an incision complex.

It is found in the cytoplasm. In terms of biological role, the UvrABC repair system catalyzes the recognition and processing of DNA lesions. A damage recognition complex composed of 2 UvrA and 2 UvrB subunits scans DNA for abnormalities. Upon binding of the UvrA(2)B(2) complex to a putative damaged site, the DNA wraps around one UvrB monomer. DNA wrap is dependent on ATP binding by UvrB and probably causes local melting of the DNA helix, facilitating insertion of UvrB beta-hairpin between the DNA strands. Then UvrB probes one DNA strand for the presence of a lesion. If a lesion is found the UvrA subunits dissociate and the UvrB-DNA preincision complex is formed. This complex is subsequently bound by UvrC and the second UvrB is released. If no lesion is found, the DNA wraps around the other UvrB subunit that will check the other stand for damage. In Thermotoga maritima (strain ATCC 43589 / DSM 3109 / JCM 10099 / NBRC 100826 / MSB8), this protein is UvrABC system protein B.